A 90-amino-acid polypeptide reads, in one-letter code: Phosphocarrier protein NPr (90 aa).

An HPr domain is found at 2–90; sequence TVKQTVEITN…ALFNSGFDED (89 aa). Residue H16 is the Pros-phosphohistidine intermediate of the active site.

It belongs to the HPr family.

The protein localises to the cytoplasm. Its function is as follows. Component of the phosphoenolpyruvate-dependent nitrogen-metabolic phosphotransferase system (nitrogen-metabolic PTS), that seems to be involved in regulating nitrogen metabolism. The phosphoryl group from phosphoenolpyruvate (PEP) is transferred to the phosphoryl carrier protein NPr by enzyme I-Ntr. Phospho-NPr then transfers it to EIIA-Ntr. Could function in the transcriptional regulation of sigma-54 dependent operons in conjunction with the NPr (PtsO) and EIIA-Ntr (PtsN) proteins. In Escherichia coli O157:H7, this protein is Phosphocarrier protein NPr (ptsO).